The sequence spans 273 residues: NH(3)-dependent NAD(+) synthetase (273 aa).

47–54 is an ATP binding site; sequence GISGGQDS. D53 is a binding site for Mg(2+). R139 lines the deamido-NAD(+) pocket. T159 is a binding site for ATP. E164 lines the Mg(2+) pocket. Deamido-NAD(+) contacts are provided by K172 and D179. The ATP site is built by K188 and T210. A deamido-NAD(+)-binding site is contributed by 259–260; the sequence is HK.

It belongs to the NAD synthetase family. In terms of assembly, homodimer.

It carries out the reaction deamido-NAD(+) + NH4(+) + ATP = AMP + diphosphate + NAD(+) + H(+). Its pathway is cofactor biosynthesis; NAD(+) biosynthesis; NAD(+) from deamido-NAD(+) (ammonia route): step 1/1. Functionally, catalyzes the ATP-dependent amidation of deamido-NAD to form NAD. Uses ammonia as a nitrogen source. The sequence is that of NH(3)-dependent NAD(+) synthetase from Staphylococcus aureus (strain MRSA252).